The primary structure comprises 502 residues: AMP phosphorylase (502 aa).

AMP is bound by residues Gly-168, 195–200 (SRAITS), and Thr-204. The active-site Proton donor is the Asp-257. The AMP site is built by Ser-265 and Lys-289.

Belongs to the thymidine/pyrimidine-nucleoside phosphorylase family. Type 2 subfamily.

The catalysed reaction is AMP + phosphate = alpha-D-ribose 1,5-bisphosphate + adenine. It catalyses the reaction CMP + phosphate = cytosine + alpha-D-ribose 1,5-bisphosphate. It carries out the reaction UMP + phosphate = alpha-D-ribose 1,5-bisphosphate + uracil. Its function is as follows. Catalyzes the conversion of AMP and phosphate to adenine and ribose 1,5-bisphosphate (R15P). Exhibits phosphorylase activity toward CMP and UMP in addition to AMP. Functions in an archaeal AMP degradation pathway, together with R15P isomerase and RubisCO. The protein is AMP phosphorylase of Hyperthermus butylicus (strain DSM 5456 / JCM 9403 / PLM1-5).